Here is a 347-residue protein sequence, read N- to C-terminus: Protein RecA (347 aa).

ATP is bound at residue G64–T71.

It belongs to the RecA family.

It localises to the cytoplasm. In terms of biological role, can catalyze the hydrolysis of ATP in the presence of single-stranded DNA, the ATP-dependent uptake of single-stranded DNA by duplex DNA, and the ATP-dependent hybridization of homologous single-stranded DNAs. It interacts with LexA causing its activation and leading to its autocatalytic cleavage. The protein is Protein RecA of Bartonella bacilliformis (strain ATCC 35685 / KC583 / Herrer 020/F12,63).